Reading from the N-terminus, the 284-residue chain is Homoserine O-acetyltransferase 2 (284 aa).

Cys133 functions as the Acyl-thioester intermediate in the catalytic mechanism. Substrate-binding residues include Lys154 and Ser178. The active-site Proton acceptor is the His220. Glu222 is a catalytic residue. Arg234 contributes to the substrate binding site.

This sequence belongs to the MetA family.

It is found in the cytoplasm. The catalysed reaction is L-homoserine + acetyl-CoA = O-acetyl-L-homoserine + CoA. It participates in amino-acid biosynthesis; L-methionine biosynthesis via de novo pathway; O-acetyl-L-homoserine from L-homoserine: step 1/1. Its function is as follows. Transfers an acetyl group from acetyl-CoA to L-homoserine, forming acetyl-L-homoserine. The protein is Homoserine O-acetyltransferase 2 of Ilyobacter polytropus (strain ATCC 51220 / DSM 2926 / LMG 16218 / CuHBu1).